An 81-amino-acid chain; its full sequence is MQLYPANVKGLRYSECCILTANPSVQHFVMHDDAGVPLTYSVSTLHAELTDHLYLPTTRKTVAVGKKTLFVVQKKRFKPET.

This is an uncharacterized protein from Schizosaccharomyces pombe (strain 972 / ATCC 24843) (Fission yeast).